The chain runs to 327 residues: Phenylalanine--tRNA ligase alpha subunit (327 aa).

Glu252 lines the Mg(2+) pocket.

It belongs to the class-II aminoacyl-tRNA synthetase family. Phe-tRNA synthetase alpha subunit type 1 subfamily. Tetramer of two alpha and two beta subunits. It depends on Mg(2+) as a cofactor.

Its subcellular location is the cytoplasm. It carries out the reaction tRNA(Phe) + L-phenylalanine + ATP = L-phenylalanyl-tRNA(Phe) + AMP + diphosphate + H(+). In Photorhabdus laumondii subsp. laumondii (strain DSM 15139 / CIP 105565 / TT01) (Photorhabdus luminescens subsp. laumondii), this protein is Phenylalanine--tRNA ligase alpha subunit.